Here is a 358-residue protein sequence, read N- to C-terminus: Transcription factor bHLH67 (358 aa).

The segment at 125–176 is disordered; sequence NMTLPSSTSSPLSAHSRRKRKINHLLPQEMTREKRKRRKTKPSKNNEEIENQ. Residues 127 to 137 show a composition bias toward low complexity; the sequence is TLPSSTSSPLS. Residues 157 to 166 are compositionally biased toward basic residues; the sequence is EKRKRRKTKP. Positions 175-226 constitute a bHLH domain; the sequence is NQRINHIAVERNRRRQMNEHINSLRALLPPSYIQRGDQASIVGGAINYVKVL.

Homodimer. In terms of tissue distribution, expressed constitutively in roots, leaves, stems, and flowers.

It localises to the nucleus. This chain is Transcription factor bHLH67 (BHLH67), found in Arabidopsis thaliana (Mouse-ear cress).